Here is a 400-residue protein sequence, read N- to C-terminus: MGGWLPKPRKGMGTNLSVPNPLGFFPDHQLDPAFGANSNNPDWDFNPIKDHWPQANQVGVGAFGPGFTPPHGGVLGWSPQAQGTLTTVPAVPPPASANRQSGRQPTPISPPLRDSHPQAIKWNSPAFHQALQDPRVKGLYFPAGGSSSGTVSPVPNIASHISSISSRTGDPAPTMENITSGFLGPLLVLQAGFFLLTRILTIPQSLDSWWTSLNFLGGSPVCLGQNSQSPTSNHSPTSCPPICPGYRWMCLRRFIIFLFILLLCLIFLLVLLDYQGMLPVCPLIPGSTTTSTGPCRTCTTPAQGNSMFPSCCCTKPTDGNCTCIPIPSSWAFAKYLWEWASVRFSWLSLLVPFVQWFVGLSPTVWLSVIWMMWYWGPRLYNILSPFIPLLPIFFCLWVYI.

Residue G2 is the site of N-myristoyl glycine; by host attachment. The pre-S1 stretch occupies residues 2-119; that stretch reads GGWLPKPRKG…PPLRDSHPQA (118 aa). The interval 2 to 174 is pre-S; the sequence is GGWLPKPRKG…SSRTGDPAPT (173 aa). Residues 2–181 are Virion surface; in external conformation-facing; sequence GGWLPKPRKG…APTMENITSG (180 aa). Over 2–253 the chain is Intravirion; in internal conformation; sequence GGWLPKPRKG…PGYRWMCLRR (252 aa). Residues 84-115 form a disordered region; it reads TLTTVPAVPPPASANRQSGRQPTPISPPLRDS. Residues 97-106 show a composition bias toward polar residues; that stretch reads ANRQSGRQPT. The tract at residues 120–174 is pre-S2; it reads IKWNSPAFHQALQDPRVKGLYFPAGGSSSGTVSPVPNIASHISSISSRTGDPAPT. Residues 182–202 form a helical membrane-spanning segment; it reads FLGPLLVLQAGFFLLTRILTI. Residues 203-253 are Intravirion; in external conformation-facing; it reads PQSLDSWWTSLNFLGGSPVCLGQNSQSPTSNHSPTSCPPICPGYRWMCLRR. A helical transmembrane segment spans residues 254–274; sequence FIIFLFILLLCLIFLLVLLDY. Residues 275 to 348 are Virion surface-facing; it reads QGMLPVCPLI…WASVRFSWLS (74 aa). N-linked (GlcNAc...) asparagine; by host glycosylation occurs at N320. The chain crosses the membrane as a helical span at residues 349-369; it reads LLVPFVQWFVGLSPTVWLSVI. The Intravirion portion of the chain corresponds to 370–375; that stretch reads WMMWYW. Residues 376–398 traverse the membrane as a helical segment; that stretch reads GPRLYNILSPFIPLLPIFFCLWV. Topologically, residues 399-400 are virion surface; the sequence is YI.

The protein belongs to the orthohepadnavirus major surface antigen family. Li-HBsAg interacts with capsid protein and with HDV Large delta antigen. Isoform M associates with host chaperone CANX through its pre-S2 N glycan. This association may be essential for M proper secretion. In terms of processing, isoform M is N-terminally acetylated by host at a ratio of 90%, and N-glycosylated by host at the pre-S2 region. Myristoylated.

The protein resides in the virion membrane. Its function is as follows. The large envelope protein exists in two topological conformations, one which is termed 'external' or Le-HBsAg and the other 'internal' or Li-HBsAg. In its external conformation the protein attaches the virus to cell receptors and thereby initiating infection. This interaction determines the species specificity and liver tropism. This attachment induces virion internalization predominantly through caveolin-mediated endocytosis. The large envelope protein also assures fusion between virion membrane and endosomal membrane. In its internal conformation the protein plays a role in virion morphogenesis and mediates the contact with the nucleocapsid like a matrix protein. In terms of biological role, the middle envelope protein plays an important role in the budding of the virion. It is involved in the induction of budding in a nucleocapsid independent way. In this process the majority of envelope proteins bud to form subviral lipoprotein particles of 22 nm of diameter that do not contain a nucleocapsid. This chain is Large envelope protein, found in Hepatitis B virus genotype A3 (isolate Cameroon/CMR983/1994) (HBV-A).